Reading from the N-terminus, the 124-residue chain is UPF0102 protein MSMEG_2508/MSMEI_2448 (124 aa).

It belongs to the UPF0102 family.

The chain is UPF0102 protein MSMEG_2508/MSMEI_2448 from Mycolicibacterium smegmatis (strain ATCC 700084 / mc(2)155) (Mycobacterium smegmatis).